Reading from the N-terminus, the 91-residue chain is Cell division topological specificity factor (91 aa).

Belongs to the MinE family.

Functionally, prevents the cell division inhibition by proteins MinC and MinD at internal division sites while permitting inhibition at polar sites. This ensures cell division at the proper site by restricting the formation of a division septum at the midpoint of the long axis of the cell. The protein is Cell division topological specificity factor of Gloeobacter violaceus (strain ATCC 29082 / PCC 7421).